Here is a 209-residue protein sequence, read N- to C-terminus: Small ribosomal subunit protein uS4 (209 aa).

An S4 RNA-binding domain is found at 99-164 (GRLDSVVYRM…QLRVKAALEA (66 aa)).

The protein belongs to the universal ribosomal protein uS4 family. As to quaternary structure, part of the 30S ribosomal subunit. Contacts protein S5. The interaction surface between S4 and S5 is involved in control of translational fidelity.

Functionally, one of the primary rRNA binding proteins, it binds directly to 16S rRNA where it nucleates assembly of the body of the 30S subunit. With S5 and S12 plays an important role in translational accuracy. The polypeptide is Small ribosomal subunit protein uS4 (Aromatoleum aromaticum (strain DSM 19018 / LMG 30748 / EbN1) (Azoarcus sp. (strain EbN1))).